The sequence spans 90 residues: Conotoxin TxMMSK-06 (90 aa).

The N-terminal stretch at M1–P22 is a signal peptide. A propeptide spanning residues L23–R74 is cleaved from the precursor. The segment at D24 to E43 is disordered. Positions G25–E43 are enriched in basic and acidic residues. Disulfide bonds link C75-C89, C76-C85, and C81-C88. The residue at position 87 (P87) is a 4-hydroxyproline. Residue C89 is modified to Cysteine amide.

This sequence belongs to the conotoxin M superfamily. As to expression, expressed by the venom duct.

It localises to the secreted. This Conus textile (Cloth-of-gold cone) protein is Conotoxin TxMMSK-06.